Here is a 573-residue protein sequence, read N- to C-terminus: NADH-ubiquinone oxidoreductase chain 5 (573 aa).

Helical transmembrane passes span 4 to 24, 44 to 64, 85 to 105, 106 to 126, 147 to 167, 170 to 190, 212 to 234, 239 to 259, 268 to 288, 294 to 314, 337 to 357, 377 to 396, 422 to 442, 452 to 472, 487 to 507, and 552 to 572; these read ISFI…LYYL, IVMT…VLMI, FIML…SPNL, VSIL…VIYF, VALL…YIFY, VMQN…AAMT, SALV…FNIV, WLGQ…GLGA, IIAL…SMGF, FHLL…GAII, SACF…AGFY, FLYF…LVYY, LGLL…IFPF, LKML…LISI, LTLF…GMIF, and LKIY…FLLF.

The protein belongs to the complex I subunit 5 family.

It is found in the mitochondrion inner membrane. It carries out the reaction a ubiquinone + NADH + 5 H(+)(in) = a ubiquinol + NAD(+) + 4 H(+)(out). Its function is as follows. Core subunit of the mitochondrial membrane respiratory chain NADH dehydrogenase (Complex I) that is believed to belong to the minimal assembly required for catalysis. Complex I functions in the transfer of electrons from NADH to the respiratory chain. The immediate electron acceptor for the enzyme is believed to be ubiquinone. The sequence is that of NADH-ubiquinone oxidoreductase chain 5 (mt:ND5) from Drosophila yakuba (Fruit fly).